We begin with the raw amino-acid sequence, 187 residues long: UPF0398 protein SAB1311c (187 aa).

The protein belongs to the UPF0398 family.

In Staphylococcus aureus (strain bovine RF122 / ET3-1), this protein is UPF0398 protein SAB1311c.